The sequence spans 148 residues: Large ribosomal subunit protein bL9 (148 aa).

The protein belongs to the bacterial ribosomal protein bL9 family.

Binds to the 23S rRNA. In Bacillus cereus (strain ATCC 10987 / NRS 248), this protein is Large ribosomal subunit protein bL9.